A 661-amino-acid chain; its full sequence is Fusaric acid cluster transcription factor FUB12 (661 aa).

The zn(2)-C6 fungal-type DNA-binding region spans 17 to 48; it reads CVPCRTRKIKCNAAVVGLPCGSCVSRECPDDC. Disordered regions lie at residues 57–131 and 151–184; these read TVKV…RPPG and SAAQ…PQLD. The segment covering 73-98 has biased composition (polar residues); the sequence is PDTNGSVLSPRQQQLPTNVSRQTTDS. The span at 99–109 shows a compositional bias: basic and acidic residues; it reads SHSDPVEESIH. Positions 110–119 are enriched in polar residues; sequence ASHTGSSLRN. Over residues 120 to 129 the composition is skewed to basic and acidic residues; that stretch reads DTPHSRDRRP.

The protein localises to the nucleus. Its function is as follows. Efflux pump involved in export of biosynthesis of fusaric acid, a mycotoxin with low to moderate toxicity to animals and humans, but with high phytotoxic properties. Constitutes a self-protecting mechanism of the fungus against critical levels of FSA within the cell. This chain is Fusaric acid cluster transcription factor FUB12, found in Fusarium oxysporum f. sp. lycopersici (strain 4287 / CBS 123668 / FGSC 9935 / NRRL 34936) (Fusarium vascular wilt of tomato).